The chain runs to 311 residues: Olfactory receptor 8H1 (311 aa).

The Extracellular portion of the chain corresponds to 1–25; it reads MGRRNNTNVPDFILTGLSDSEEVQM. N-linked (GlcNAc...) asparagine glycosylation occurs at N5. The helical transmembrane segment at 26–46 threads the bilayer; sequence ALFILFLLIYLITMLGNVGMI. Residues 47–54 lie on the Cytoplasmic side of the membrane; the sequence is LIIRLDLQ. The helical transmembrane segment at 55–75 threads the bilayer; the sequence is LHTPMYFFLTHLSFIDLSYST. The Extracellular segment spans residues 76 to 98; sequence VITPKTLANLLTSNYISFMGCFA. Residues C96 and C188 are joined by a disulfide bond. Residues 99–119 traverse the membrane as a helical segment; that stretch reads QMFFFVFLGAAECFLLSSMAY. Residues 120-138 lie on the Cytoplasmic side of the membrane; that stretch reads DRYVAICSPLRYPVIMSKR. Residues 139-159 traverse the membrane as a helical segment; that stretch reads LCCALVTGPYVISFINSFVNV. Topologically, residues 160–196 are extracellular; that stretch reads VWMSRLHFCDSNVVRHFFCDTSPILALSCMDTYDIEI. The chain crosses the membrane as a helical span at residues 197–216; it reads MIHILAGSTLMVSLITISAS. Over 217-236 the chain is Cytoplasmic; that stretch reads YVSILSTILKINSTSGKQKA. The chain crosses the membrane as a helical span at residues 237 to 257; it reads LSTCASHLLGVTIFYGTMIFT. Residues 258-270 lie on the Extracellular side of the membrane; the sequence is YLKPRKSYSLGRD. Residues 271 to 291 traverse the membrane as a helical segment; sequence QVASVFYTIVIPMLNPLIYSL. The Cytoplasmic portion of the chain corresponds to 292–311; it reads RNKEVKNALIRVMQRRQDSR.

Belongs to the G-protein coupled receptor 1 family.

The protein resides in the cell membrane. Its function is as follows. Odorant receptor. The chain is Olfactory receptor 8H1 (OR8H1) from Homo sapiens (Human).